A 47-amino-acid polypeptide reads, in one-letter code: Protein YqgG (47 aa).

The chain is Protein YqgG from Escherichia coli (strain K12).